The chain runs to 67 residues: Inosine/xanthosine triphosphatase (67 aa).

The protein belongs to the YjjX NTPase family. As to quaternary structure, homodimer. Mg(2+) is required as a cofactor. The cofactor is Mn(2+).

It catalyses the reaction XTP + H2O = XDP + phosphate + H(+). It carries out the reaction ITP + H2O = IDP + phosphate + H(+). Phosphatase that hydrolyzes non-canonical purine nucleotides such as XTP and ITP to their respective diphosphate derivatives. Probably excludes non-canonical purines from DNA/RNA precursor pool, thus preventing their incorporation into DNA/RNA and avoiding chromosomal lesions. In Enterobacter cloacae, this protein is Inosine/xanthosine triphosphatase.